Consider the following 194-residue polypeptide: Fimbrial protein 987P (194 aa).

Positions 1–23 are cleaved as a signal peptide; that stretch reads MRMKKSALTLAVLSSLFSGYSLA. Cys46 and Cys85 are joined by a disulfide.

The protein belongs to the fimbrial protein family.

It is found in the fimbrium. This is Fimbrial protein 987P (fasA) from Escherichia coli.